We begin with the raw amino-acid sequence, 116 residues long: Ribosome-binding factor A (116 aa).

Belongs to the RbfA family. Monomer. Binds 30S ribosomal subunits, but not 50S ribosomal subunits or 70S ribosomes.

The protein resides in the cytoplasm. Its function is as follows. One of several proteins that assist in the late maturation steps of the functional core of the 30S ribosomal subunit. Associates with free 30S ribosomal subunits (but not with 30S subunits that are part of 70S ribosomes or polysomes). Required for efficient processing of 16S rRNA. May interact with the 5'-terminal helix region of 16S rRNA. In Streptococcus pneumoniae serotype 4 (strain ATCC BAA-334 / TIGR4), this protein is Ribosome-binding factor A.